The sequence spans 372 residues: Glutamate 5-kinase (372 aa).

Lys14 provides a ligand contact to ATP. Substrate contacts are provided by Ser54, Asp141, and Asn153. 173 to 174 contributes to the ATP binding site; it reads TD. The region spanning 280-358 is the PUA domain; sequence RGHVVIDDGA…GEIESVLGYM (79 aa).

The protein belongs to the glutamate 5-kinase family.

The protein localises to the cytoplasm. It carries out the reaction L-glutamate + ATP = L-glutamyl 5-phosphate + ADP. It participates in amino-acid biosynthesis; L-proline biosynthesis; L-glutamate 5-semialdehyde from L-glutamate: step 1/2. Functionally, catalyzes the transfer of a phosphate group to glutamate to form L-glutamate 5-phosphate. The chain is Glutamate 5-kinase from Paraburkholderia phytofirmans (strain DSM 17436 / LMG 22146 / PsJN) (Burkholderia phytofirmans).